The sequence spans 429 residues: Sex determination protein fox-1 (429 aa).

Residues 156–180 (ATTAGSTNGSAAVTQPDPSTSSGPD) are compositionally biased toward low complexity. Residues 156–188 (ATTAGSTNGSAAVTQPDPSTSSGPDGPKRLHVS) are disordered. Residues 183-259 (KRLHVSNIPF…RKIEVNCATA (77 aa)) enclose the RRM domain.

As to quaternary structure, interacts with sup-12. As to expression, in males and hermaphrodites expressed in a subset of cells in the head and tail. Expressed in the pharynx, intestine and in muscles from the vulva and body wall.

The protein localises to the nucleus. RNA-binding protein that regulates tissue-specific alternative splicing events by binding to 5'-UGCAUG-3' and 5'-GCACG-3' elements. Also binds to poly(A), poly(G), poly(C), or poly(U) stretches of RNA. Plays a role in the sex determination pathway and X chromosome dosage compensation, and together with sex-1 is involved in making the distinction between one and two X-chromosomes. Binds to 5'-GCAUG-3' and 5'-GCACG-3' elements in intron 6 of the pre-mRNA of the sex-determining factor xol-1 to promote its alternative splicing and together with sex-1 negatively regulates the expression of xol-1 to promote hermaphrodite development. Negatively regulates the expression of the active isoform of xol-1 (isoform b) by promoting intron 6 retention and the deletion of exon 7 coding sequences in hermaphrodite embryos. Furthermore, binding to the pre-mRNA of xol-1 can also direct the use of an alternative 3' splice site enabling the xol-1 transcript to be trans-spliced to unrelated genes on chromosome 2, which also leads to xol-1 exon 7 deletion. Does not seem to regulate the retention of introns 1 to 5 of xol-1 pre-mRNA. Plays a role in the association of the dosage compensation complex proteins dpy-27 and sdc-3 with the hermaphrodite X chromosomes. Binds to 5'-UGCAUG-3' elements in intron 7 of the pre-mRNA of unc-32 to promote its alternative splicing in neuronal tissues. Binds to 5'-UGCAUG-3' elements in intron 4 of the pre-mRNA of egl-15 to promote its alternative splicing in body wall muscle tissues. Promotes binding of RNA-binding protein sup-12 to target RNA. Plays a role in male mating behavior. This chain is Sex determination protein fox-1, found in Caenorhabditis elegans.